Reading from the N-terminus, the 664-residue chain is DNA mismatch repair protein MutL (664 aa).

The protein belongs to the DNA mismatch repair MutL/HexB family.

In terms of biological role, this protein is involved in the repair of mismatches in DNA. It is required for dam-dependent methyl-directed DNA mismatch repair. May act as a 'molecular matchmaker', a protein that promotes the formation of a stable complex between two or more DNA-binding proteins in an ATP-dependent manner without itself being part of a final effector complex. This Clostridium beijerinckii (strain ATCC 51743 / NCIMB 8052) (Clostridium acetobutylicum) protein is DNA mismatch repair protein MutL.